The following is an 890-amino-acid chain: Phosphatidate phosphatase LPIN1 (890 aa).

Residues 1 to 108 (MNYVGQLAGQ…IPMHLATSPI (108 aa)) are N-LIP. Residues Ser106 and Ser150 each carry the phosphoserine modification. Disordered regions lie at residues 125 to 183 (VDRM…DMFP), 228 to 300 (SYPN…SSRK), 365 to 392 (KPPSASVVQTANKTDSPSRKRDKRSRHL), and 421 to 456 (SGLAKHASDNGARSANQSPQSVGSSGVDSGVESTSD). Residues 152-161 (VKKRRKRRRK) show a composition bias toward basic residues. The short motif at 153–158 (KKRRKR) is the Nuclear localization signal element. 2 stretches are compositionally biased toward basic and acidic residues: residues 162–172 (SQLDSLKRDDN) and 252–265 (SDSELVSKSTERTG). Ser252, Ser254, and Ser260 each carry phosphoserine. Phosphothreonine is present on Thr264. Ser294 bears the Phosphoserine mark. Lys425 carries the post-translational modification N6-acetyllysine. The segment covering 431-440 (GARSANQSPQ) has biased composition (polar residues). Phosphoserine is present on residues Ser434, Ser438, and Ser449. Low complexity predominate over residues 441 to 456 (SVGSSGVDSGVESTSD). A Glycyl lysine isopeptide (Lys-Gly) (interchain with G-Cter in SUMO) cross-link involves residue Lys565. The tract at residues 566 to 616 (EESKPEQCLAGKAHSTGEQPPQLSLATRVKHESSSSDEERAAAKPSNAGHL) is disordered. The segment covering 581-590 (TGEQPPQLSL) has biased composition (polar residues). The segment covering 594–607 (VKHESSSSDEERAA) has biased composition (basic and acidic residues). Lys595 is subject to N6-acetyllysine. A Glycyl lysine isopeptide (Lys-Gly) (interchain with G-Cter in SUMO) cross-link involves residue Lys595. A phosphoserine mark is found at Ser600 and Ser601. A C-LIP region spans residues 624–830 (YKKTLRLTSE…VNPKGELVQE (207 aa)). The short motif at 678–682 (DIDGT) is the DXDXT motif element. Residues 689–693 (LGHIL) carry the LXXIL motif motif. A phosphoserine mark is found at Ser887 and Ser889.

Belongs to the lipin family. In terms of assembly, interacts (via LXXIL motif) with PPARA. Interacts with PPARGC1A. Interaction with PPARA and PPARGC1A leads to the formation of a complex that modulates gene transcription. Interacts with MEF2C. It depends on Mg(2+) as a cofactor. Requires Mn(2+) as cofactor. In terms of processing, phosphorylated at multiple sites by mTOR in response to insulin, leading to its inactivation. Phosphorylation does not affect the catalytic activity but regulates the localization. Phosphorylation is decreased by epinephrine. Dephosphorylated by the CTDNEP1-CNEP1R1 complex. Dephosphorylation following mTOR inhibition promotes its activity. Post-translationally, acetylation at Lys-425 and Lys-595 by KAT5 in response to fatty acids promotes translocation to the endoplasmic reticulum and synthesis of diacylglycerol. Sumoylated. Specifically expressed in skeletal muscle. Also abundant in adipose tissue. Lower levels in some portions of the digestive tract.

Its subcellular location is the cytoplasm. The protein localises to the cytosol. It is found in the endoplasmic reticulum membrane. It localises to the nucleus membrane. It carries out the reaction a 1,2-diacyl-sn-glycero-3-phosphate + H2O = a 1,2-diacyl-sn-glycerol + phosphate. The enzyme catalyses 1-octadecanoyl-2-(4Z,7Z,10Z,13Z,16Z,19Z-docosahexaenoyl)-sn-glycero-3-phosphate + H2O = 1-octadecanoyl-2-(4Z,7Z,10Z,13Z,16Z,19Z-docosahexaenoyl)-sn-glycerol + phosphate. It catalyses the reaction 1-octadecanoyl-2-(5Z,8Z,11Z,14Z-eicosatetraenoyl)-sn-glycero-3-phosphate + H2O = 1-octadecanoyl-2-(5Z,8Z,11Z,14Z-eicosatetraenoyl)-sn-glycerol + phosphate. The catalysed reaction is 1-octadecanoyl-2-(9Z,12Z-octadecadienoyl)-sn-glycero-3-phosphate + H2O = 1-octadecanoyl-2-(9Z,12Z)-octadecadienoyl-sn-glycerol + phosphate. It carries out the reaction 1-octadecanoyl-2-(9Z-octadecenoyl)-sn-glycero-3-phosphate + H2O = 1-octadecanoyl-2-(9Z-octadecenoyl)-sn-glycerol + phosphate. The enzyme catalyses 1-hexadecanoyl-2-(4Z,7Z,10Z,13Z,16Z,19Z-docosahexaenoyl)-sn-glycero-3-phosphate + H2O = 1-hexadecanoyl-2-(4Z,7Z,10Z,13Z,16Z,19Z-docosahexaenoyl)-sn-glycerol + phosphate. It catalyses the reaction 1,2-dioctadecanoyl-sn-glycero-3-phosphate + H2O = 1,2-dioctadecanoyl-sn-glycerol + phosphate. The catalysed reaction is 1-hexadecanoyl-2-(5Z,8Z,11Z,14Z-eicosatetraenoyl)-sn-glycero-3-phosphate + H2O = 1-hexadecanoyl-2-(5Z,8Z,11Z,14Z-eicosatetraenoyl)-sn-glycerol + phosphate. It carries out the reaction 1-hexadecanoyl-2-(9Z,12Z-octadecadienoyl)-sn-glycero-3-phosphate + H2O = 1-hexadecanoyl-2-(9Z,12Z-octadecadienoyl)-sn-glycerol + phosphate. The enzyme catalyses 1-hexadecanoyl-2-(9Z-octadecenoyl)-sn-glycero-3-phosphate + H2O = 1-hexadecanoyl-2-(9Z-octadecenoyl)-sn-glycerol + phosphate. It catalyses the reaction 1,2-di-(4Z,7Z,10Z,13Z,16Z,19Z-docosahexaenoyl)-sn-glycero-3-phosphate + H2O = 1,2-di-(4Z,7Z,10Z,13Z,16Z,19Z-docosahexaenoyl)-sn-glycerol + phosphate. The catalysed reaction is 1,2-di-(5Z,8Z,11Z,14Z)-eicosatetraenoyl-sn-glycero-3-phosphate + H2O = 1,2-di-(5Z,8Z,11Z,14Z)-eicosatetraenoyl-sn-glycerol + phosphate. It carries out the reaction 1,2-di-(9Z,12Z-octadecadienoyl)-sn-glycero-3-phosphate + H2O = 1,2-di-(9Z,12Z-octadecadienoyl)-sn-glycerol + phosphate. The enzyme catalyses 1,2-di-(9Z-octadecenoyl)-sn-glycero-3-phosphate + H2O = 1,2-di-(9Z-octadecenoyl)-sn-glycerol + phosphate. It catalyses the reaction 1,2-dihexadecanoyl-sn-glycero-3-phosphate + H2O = 1,2-dihexadecanoyl-sn-glycerol + phosphate. Its activity is regulated as follows. Potently inhibited by sphingolipids, in particular, the sphingoid bases sphinganine and sphingosine and ceramide-1-phosphate. Inhibited by concentrations of Mg(2+) and Mn(2+) above their optimums and by Ca(2+), Zn(2+), N-ethylmaleimide and propranolol. Sertraline and propanolol inhibit activity in dose-dependent manners with IC(50) values of 103 uM and 226 uM, respectively. With respect to regulation, sertraline and propanolol inhibit activity in dose-dependent manners with IC(50) values of 108 uM and 271 uM, respectively. Its activity is regulated as follows. Sertraline and propanolol inhibit activity in dose-dependent manners with IC(50) values of 143 uM and 227 uM, respectively. Functionally, acts as a magnesium-dependent phosphatidate phosphatase enzyme which catalyzes the conversion of phosphatidic acid to diacylglycerol during triglyceride, phosphatidylcholine and phosphatidylethanolamine biosynthesis and therefore controls the metabolism of fatty acids at different levels. Is involved in adipocyte differentiation. Recruited at the mitochondrion outer membrane and is involved in mitochondrial fission by converting phosphatidic acid to diacylglycerol. Acts also as nuclear transcriptional coactivator for PPARGC1A/PPARA regulatory pathway to modulate lipid metabolism gene expression. The polypeptide is Phosphatidate phosphatase LPIN1 (Homo sapiens (Human)).